Consider the following 307-residue polypeptide: Cuticle collagen 36 (307 aa).

Disordered regions lie at residues 76–102 (TRSRRDAGYKEGSGSGGSGSGGYGGPT) and 116–307 (QQGP…PPGY). A compositionally biased stretch (gly residues) spans 86–102 (EGSGSGGSGSGGYGGPT). Triple-helical region stretches follow at residues 89–105 (GSGGSGSGGYGGPTGAG), 118–150 (GPAGPPGPAGDTGPNGNDGHHGAPGVPGKEGSI), 167–187 (GPQGAVGQQGPKGPPGPKGKS), 194–226 (GKNGEPGMIGPPGPPGGVGEPGPPGPAGQPGRV), 231–257 (GAAGPAGPRGVKGPPGPKGLPGIAGLT), and 260–295 (GGQGPPGDAGGPGPVGGQGPPGPQGPQGPPGDEGSC). A compositionally biased stretch (pro residues) spans 157–168 (PSEPCIICPPGP). The segment covering 186–196 (KSQERAADGKN) has biased composition (basic and acidic residues). The span at 202–220 (IGPPGPPGGVGEPGPPGPA) shows a compositional bias: pro residues. Positions 231 to 242 (GAAGPAGPRGVK) are enriched in low complexity. Residues 258 to 278 (EIGGQGPPGDAGGPGPVGGQG) show a composition bias toward gly residues. Pro residues predominate over residues 279–288 (PPGPQGPQGP).

The protein belongs to the cuticular collagen family. In terms of assembly, collagen polypeptide chains are complexed within the cuticle by disulfide bonds and other types of covalent cross-links.

Functionally, nematode cuticles are composed largely of collagen-like proteins. The cuticle functions both as an exoskeleton and as a barrier to protect the worm from its environment. The sequence is that of Cuticle collagen 36 (col-36) from Caenorhabditis elegans.